We begin with the raw amino-acid sequence, 137 residues long: Cellular retinoic acid-binding protein 1 (137 aa).

Positions 21-31 (KALGVNTMLRK) match the Nuclear localization signal motif. 132–134 (RIY) serves as a coordination point for all-trans-retinoate.

It belongs to the calycin superfamily. Fatty-acid binding protein (FABP) family.

The protein resides in the cytoplasm. Functionally, cytosolic CRABPs may regulate the access of retinoic acid to the nuclear retinoic acid receptors. The sequence is that of Cellular retinoic acid-binding protein 1 (crabp1) from Takifugu rubripes (Japanese pufferfish).